We begin with the raw amino-acid sequence, 131 residues long: MSMSDPIADMLTRIRNAQGVQKASVVMPSSKLKVAIAKVLKDEGYIDDYAVQEDGGKAQLSIGLKYYAGRPVIERIERVSKPGLRVYKGRSDIPQVMNGLGVAIISTPQGLMTDRKARATGVGGEVLCYVA.

Belongs to the universal ribosomal protein uS8 family. In terms of assembly, part of the 30S ribosomal subunit. Contacts proteins S5 and S12.

Functionally, one of the primary rRNA binding proteins, it binds directly to 16S rRNA central domain where it helps coordinate assembly of the platform of the 30S subunit. This is Small ribosomal subunit protein uS8 from Cupriavidus necator (strain ATCC 17699 / DSM 428 / KCTC 22496 / NCIMB 10442 / H16 / Stanier 337) (Ralstonia eutropha).